Consider the following 200-residue polypeptide: Peptidyl-tRNA hydrolase (200 aa).

Tyr17 contributes to the tRNA binding site. The Proton acceptor role is filled by His22. TRNA contacts are provided by Tyr78, Asn80, and Asn126.

Belongs to the PTH family. As to quaternary structure, monomer.

The protein resides in the cytoplasm. The enzyme catalyses an N-acyl-L-alpha-aminoacyl-tRNA + H2O = an N-acyl-L-amino acid + a tRNA + H(+). Functionally, hydrolyzes ribosome-free peptidyl-tRNAs (with 1 or more amino acids incorporated), which drop off the ribosome during protein synthesis, or as a result of ribosome stalling. Its function is as follows. Catalyzes the release of premature peptidyl moieties from peptidyl-tRNA molecules trapped in stalled 50S ribosomal subunits, and thus maintains levels of free tRNAs and 50S ribosomes. The sequence is that of Peptidyl-tRNA hydrolase from Cutibacterium acnes (strain DSM 16379 / KPA171202) (Propionibacterium acnes).